A 314-amino-acid polypeptide reads, in one-letter code: Putative S-adenosyl-L-methionine-dependent methyltransferase MRA_3805 (314 aa).

S-adenosyl-L-methionine-binding positions include aspartate 132 and 161–162 (DL).

The protein belongs to the UPF0677 family.

Exhibits S-adenosyl-L-methionine-dependent methyltransferase activity. The sequence is that of Putative S-adenosyl-L-methionine-dependent methyltransferase MRA_3805 from Mycobacterium tuberculosis (strain ATCC 25177 / H37Ra).